The primary structure comprises 525 residues: Nucleolar and spindle-associated protein 1-C (525 aa).

4 disordered regions span residues 43–203, 250–293, 373–398, and 452–525; these read FYPE…KKLH, TPVS…FSAA, TPESEPKQMLPSVKKNEPMTTPEKAK, and LSRP…VPVQ. Over residues 58–69 the composition is skewed to polar residues; that stretch reads SSLTDTDELNSS. The segment covering 82–92 has biased composition (basic residues); it reads THRRGRGRKPL. Over residues 93-102 the composition is skewed to basic and acidic residues; that stretch reads KNHDTPKDEF. Over residues 113-127 the composition is skewed to polar residues; that stretch reads SLASETDNTQHQNCL. The segment covering 160 to 169 has biased composition (basic and acidic residues); it reads TTEKRQKKAS. The span at 270–285 shows a compositional bias: polar residues; sequence PPTTGASPSRTPTNQR. Over residues 476-494 the composition is skewed to polar residues; it reads CGSNNNVSVLKNNFKQPHL. Over residues 495-514 the composition is skewed to basic and acidic residues; sequence QTREDRRKQHEQDRKGKRDQ.

This sequence belongs to the NUSAP family. As to quaternary structure, interacts with DNA, microtubules, ipo7, kpna2 and kpnb1. Microtubule stabilization is inhibited by ipo7 and kpna2, while microtubule bundling is inhibited by kpnb1. Active GTP-bound ran causes dissociation of ipo7 and kpnb1.

Its subcellular location is the cytoplasm. It localises to the nucleus. The protein resides in the cytoskeleton. It is found in the spindle. Functionally, microtubule-associated protein with the capacity to bundle and stabilize microtubules. May associate with chromosomes and promote the organization of meiotic or mitotic spindle microtubules around them. This Xenopus laevis (African clawed frog) protein is Nucleolar and spindle-associated protein 1-C (nusap1-c).